Reading from the N-terminus, the 134-residue chain is Lymphocyte antigen 6F (134 aa).

An N-terminal signal peptide occupies residues 1–26 (MDSCHTTKSCVLILLVVLLCAERAQG). The region spanning 27–119 (LECYNCLGVS…TGGSTWTMTR (93 aa)) is the UPAR/Ly6 domain. 5 disulfides stabilise this stretch: Cys-29/Cys-53, Cys-32/Cys-41, Cys-46/Cys-74, Cys-78/Cys-98, and Cys-99/Cys-104. A lipid anchor (GPI-anchor amidated glycine) is attached at Gly-112. The propeptide at 113–134 (STWTMTRVLLLNLGSVFLQTLL) is removed in mature form.

The protein localises to the cell membrane. In Mus musculus (Mouse), this protein is Lymphocyte antigen 6F (Ly6f).